Consider the following 153-residue polypeptide: Large ribosomal subunit protein uL22 (153 aa).

Belongs to the universal ribosomal protein uL22 family. As to quaternary structure, part of the 50S ribosomal subunit.

In terms of biological role, this protein binds specifically to 23S rRNA. It makes multiple contacts with different domains of the 23S rRNA in the assembled 50S subunit and ribosome. Functionally, the globular domain of the protein is located near the polypeptide exit tunnel on the outside of the subunit, while an extended beta-hairpin is found that lines the wall of the exit tunnel in the center of the 70S ribosome. The chain is Large ribosomal subunit protein uL22 from Methanococcus vannielii (strain ATCC 35089 / DSM 1224 / JCM 13029 / OCM 148 / SB).